The following is a 140-amino-acid chain: Putative nickel-responsive regulator (140 aa).

Ni(2+)-binding residues include His-76, His-87, His-89, and Cys-95.

The protein belongs to the transcriptional regulatory CopG/NikR family. Ni(2+) is required as a cofactor.

Its function is as follows. Transcriptional regulator. The protein is Putative nickel-responsive regulator of Rhodopseudomonas palustris (strain BisB5).